Here is a 211-residue protein sequence, read N- to C-terminus: Ribosomal RNA small subunit methyltransferase G (211 aa).

S-adenosyl-L-methionine is bound by residues Gly-73, 126–127, and Arg-142; that span reads IE.

The protein belongs to the methyltransferase superfamily. RNA methyltransferase RsmG family.

It localises to the cytoplasm. It catalyses the reaction guanosine(527) in 16S rRNA + S-adenosyl-L-methionine = N(7)-methylguanosine(527) in 16S rRNA + S-adenosyl-L-homocysteine. Its function is as follows. Specifically methylates the N7 position of guanine in position 527 of 16S rRNA. This chain is Ribosomal RNA small subunit methyltransferase G, found in Methylorubrum extorquens (strain PA1) (Methylobacterium extorquens).